A 302-amino-acid polypeptide reads, in one-letter code: tRNA pseudouridine synthase B (302 aa).

Asp-43 serves as the catalytic Nucleophile.

The protein belongs to the pseudouridine synthase TruB family. Type 1 subfamily.

It carries out the reaction uridine(55) in tRNA = pseudouridine(55) in tRNA. Functionally, responsible for synthesis of pseudouridine from uracil-55 in the psi GC loop of transfer RNAs. The protein is tRNA pseudouridine synthase B of Burkholderia pseudomallei (strain 668).